Here is a 594-residue protein sequence, read N- to C-terminus: APOBEC1 complementation factor (594 aa).

RRM domains are found at residues C56–D134, C136–P218, and K231–P303. Positions H359–R408 are required for nuclear localization. Position 498 is a phosphothreonine (T498).

In terms of assembly, part of the apolipoprotein B mRNA editing complex with APOBEC1. Interacts with TNPO2; TNPO2 may be responsible for transport of A1CF into the nucleus. Interacts with SYNCRIP. Interacts with CELF2/CUGBP2. Interacts with RBM47. In terms of tissue distribution, isoforms 1 and 2 are widely expressed while isoforms 3 and 4 are restricted to liver and small intestine.

It is found in the nucleus. It localises to the endoplasmic reticulum. The protein localises to the cytoplasm. Functionally, essential component of the apolipoprotein B mRNA editing enzyme complex which is responsible for the postranscriptional editing of a CAA codon for Gln to a UAA codon for stop in APOB mRNA. Binds to APOB mRNA and is probably responsible for docking the catalytic subunit, APOBEC1, to the mRNA to allow it to deaminate its target cytosine. The complex also seems to protect the edited APOB mRNA from nonsense-mediated decay. This is APOBEC1 complementation factor (A1cf) from Rattus norvegicus (Rat).